Here is a 312-residue protein sequence, read N- to C-terminus: Ribonuclease Z (312 aa).

Zn(2+)-binding residues include H62, H64, D66, H67, H144, D215, and H273. D66 serves as the catalytic Proton acceptor.

It belongs to the RNase Z family. Homodimer. Requires Zn(2+) as cofactor.

The enzyme catalyses Endonucleolytic cleavage of RNA, removing extra 3' nucleotides from tRNA precursor, generating 3' termini of tRNAs. A 3'-hydroxy group is left at the tRNA terminus and a 5'-phosphoryl group is left at the trailer molecule.. In terms of biological role, zinc phosphodiesterase, which displays some tRNA 3'-processing endonuclease activity. Probably involved in tRNA maturation, by removing a 3'-trailer from precursor tRNA. The chain is Ribonuclease Z from Prochlorococcus marinus (strain MIT 9312).